Reading from the N-terminus, the 370-residue chain is 3-isopropylmalate dehydrogenase (370 aa).

G77 to E90 serves as a coordination point for NAD(+). The substrate site is built by R97, R107, R135, and D226. Positions 226, 250, and 254 each coordinate Mg(2+). G290–N302 provides a ligand contact to NAD(+).

This sequence belongs to the isocitrate and isopropylmalate dehydrogenases family. LeuB type 1 subfamily. In terms of assembly, homodimer. Mg(2+) serves as cofactor. Mn(2+) is required as a cofactor.

The protein resides in the cytoplasm. The enzyme catalyses (2R,3S)-3-isopropylmalate + NAD(+) = 4-methyl-2-oxopentanoate + CO2 + NADH. It functions in the pathway amino-acid biosynthesis; L-leucine biosynthesis; L-leucine from 3-methyl-2-oxobutanoate: step 3/4. Its function is as follows. Catalyzes the oxidation of 3-carboxy-2-hydroxy-4-methylpentanoate (3-isopropylmalate) to 3-carboxy-4-methyl-2-oxopentanoate. The product decarboxylates to 4-methyl-2 oxopentanoate. The sequence is that of 3-isopropylmalate dehydrogenase from Rhizobium etli (strain ATCC 51251 / DSM 11541 / JCM 21823 / NBRC 15573 / CFN 42).